An 87-amino-acid chain; its full sequence is MTILSTITSISRPNKISKSFVSSNGGSSISMGSNSVACYNACGGGSSYSYSSSYSGSGLDYSYKANYSSSTGNNSYVVIASSTCNCN.

Belongs to the hssA/B family.

The sequence is that of HssA/B-like protein 57 (hssl57) from Dictyostelium discoideum (Social amoeba).